A 259-amino-acid chain; its full sequence is Short chain dehydrogenase ausX (259 aa).

The NADP(+) site is built by I13, D59, R121, Y153, K157, and V186. The active-site Proton acceptor is the Y153. Y153 functions as the Proton donor in the catalytic mechanism. The active-site Lowers pKa of active site Tyr is K157.

Belongs to the short-chain dehydrogenases/reductases (SDR) family.

It functions in the pathway secondary metabolite biosynthesis; terpenoid biosynthesis. Short chain dehydrogenase; part of the gene cluster A that mediates the biosynthesis of the fungal meroterpenoid acetoxydehydroaustin. The first step of the pathway is the synthesis of 3,5-dimethylorsellinic acid by the polyketide synthase ausA. 3,5-dimethylorsellinic acid is then prenylated by the polyprenyl transferase ausN. Further epoxidation by the FAD-dependent monooxygenase ausM and cyclization by the probable terpene cyclase ausL lead to the formation of protoaustinoid A. Protoaustinoid A is then oxidized to spiro-lactone preaustinoid A3 by the combined action of the FAD-binding monooxygenases ausB and ausC, and the dioxygenase ausE. Acid-catalyzed keto-rearrangement and ring contraction of the tetraketide portion of preaustinoid A3 by ausJ lead to the formation of preaustinoid A4. The aldo-keto reductase ausK, with the help of ausH, is involved in the next step by transforming preaustinoid A4 into isoaustinone which is in turn hydroxylated by the P450 monooxygenase ausI to form austinolide. The cytochrome P450 monooxygenase ausG then modifies austinolide to austinol. Austinol is further acetylated to austin by the O-acetyltransferase ausP, which spontaneously changes to dehydroaustin. The cytochrome P450 monooxygenase then converts dehydroaustin is into 7-dehydrodehydroaustin. The hydroxylation catalyzed by ausR permits the second O-acetyltransferase ausQ to add an additional acetyl group to the molecule, leading to the formation of acetoxydehydroaustin. Due to genetic rearrangements of the clusters and the subsequent loss of some enzymes, the end product of the Penicillium brasilianum austinoid biosynthesis clusters is acetoxydehydroaustin. The polypeptide is Short chain dehydrogenase ausX (Penicillium brasilianum).